Consider the following 1005-residue polypeptide: Band 4.1-like protein 2 (1005 aa).

The segment at 1-80 is disordered; sequence MTTEVGSVSE…SRGISRFIPP (80 aa). Thr-2 is subject to N-acetylthreonine. At Ser-7 the chain carries Phosphoserine. A compositionally biased stretch (basic and acidic residues) spans 22–31; sequence ATKEKPKEVA. Residues Ser-39, Ser-58, and Ser-87 each carry the phosphoserine modification. Residue Thr-89 is modified to Phosphothreonine. Residues 93 to 196 are disordered; sequence AKDGGDKKEP…GGAAKRETKE (104 aa). Composition is skewed to basic and acidic residues over residues 111-157 and 169-196; these read VLDK…EKPS and VSKEREEKVKETQEDKLEGGAAKRETKE. Glycyl lysine isopeptide (Lys-Gly) (interchain with G-Cter in SUMO2) cross-links involve residues Lys-140 and Lys-144. Phosphoserine is present on residues Ser-170, Ser-208, Ser-386, Ser-402, Ser-499, Ser-550, Ser-562, Ser-575, Ser-598, and Ser-614. Residues 218 to 499 enclose the FERM domain; that stretch reads VQCKVTLLDG…EHHTFYRLVS (282 aa). The hydrophilic stretch occupies residues 502–610; it reads QPPKAKFLTL…KAPHLQLIEG (109 aa). The tract at residues 611–676 is spectrin--actin-binding; it reads KKNSLRVEGD…WEKRRITPLS (66 aa). Tyr-623 is modified (phosphotyrosine). Phosphoserine is present on residues Ser-627 and Ser-647. A disordered region spans residues 652–800; the sequence is KRNFMESTPE…EEAVPEASPV (149 aa). The segment covering 675-686 has biased composition (polar residues); it reads LSLQTQGSSHET. Residues 690–711 are compositionally biased toward basic and acidic residues; sequence VEEKKRAEVGKDERVITEEMNG. 2 positions are modified to phosphoserine: Ser-715 and Ser-718. The segment covering 734-746 has biased composition (low complexity); it reads STSLSSESSSSSS. 2 stretches are compositionally biased toward basic and acidic residues: residues 754–770 and 780–793; these read GEYRPHHRVTEGTIREE and EPRPAAKVVEREEA. At Thr-763 the chain carries Phosphothreonine. Ser-828 carries the phosphoserine modification. The segment at 855 to 1005 is C-terminal (CTD); the sequence is HVDIDVLPQI…ETELAEEGED (151 aa).

In terms of assembly, interacts with FCGR1A. Interacts with TRPC4. Interacts (via CTD domain) with FKBP2. Interacts with NUMA1; this interaction is negatively regulated by CDK1 during metaphase and promotes anaphase-specific localization of NUMA1 in symmetrically dividing cells. As to expression, widely expressed.

The protein resides in the cytoplasm. It is found in the cytoskeleton. Its subcellular location is the cell cortex. It localises to the cell membrane. Required for dynein-dynactin complex and NUMA1 recruitment at the mitotic cell cortex during anaphase. This chain is Band 4.1-like protein 2, found in Homo sapiens (Human).